The following is a 66-amino-acid chain: Vesicular acetylcholine transporter (66 aa).

A helical membrane pass occupies residues 1–15 (GMGLANLLYAPVLLL). Topologically, residues 16–66 (LRNVGLLTRSRSERDVLLDEPPQGLYDAVRLRERPVSGQDGEPRSPPGPFD) are cytoplasmic. The tract at residues 43-66 (AVRLRERPVSGQDGEPRSPPGPFD) is disordered.

This sequence belongs to the major facilitator superfamily. Vesicular transporter family. Interacts with SEC14L1.

Its subcellular location is the cytoplasmic vesicle. It localises to the secretory vesicle. The protein localises to the synaptic vesicle membrane. The catalysed reaction is acetylcholine(out) + 2 H(+)(in) = acetylcholine(in) + 2 H(+)(out). It carries out the reaction choline(in) + 2 H(+)(out) = choline(out) + 2 H(+)(in). It catalyses the reaction serotonin(in) + 2 H(+)(out) = serotonin(out) + 2 H(+)(in). Electrogenic antiporter that exchanges one cholinergic neurotransmitter, acetylcholine or choline, with two intravesicular protons across the membrane of synaptic vesicles. Uses the electrochemical proton gradient established by the V-type proton-pump ATPase to store neurotransmitters inside the vesicles prior to their release via exocytosis. Determines cholinergic vesicular quantal size at presynaptic nerve terminals in developing neuro-muscular junctions with an impact on motor neuron differentiation and innervation pattern. Part of forebrain cholinergic system, regulates hippocampal synapse transmissions that underlie spatial memory formation. Can transport serotonin. This chain is Vesicular acetylcholine transporter (SLC18A3), found in Macaca fuscata fuscata (Japanese macaque).